A 526-amino-acid polypeptide reads, in one-letter code: Cytochrome P450 4e2 (526 aa).

Glu307 and Cys444 together coordinate heme.

The protein belongs to the cytochrome P450 family. The cofactor is heme.

The protein localises to the endoplasmic reticulum membrane. Its subcellular location is the microsome membrane. Its function is as follows. May be involved in the metabolism of insect hormones and in the breakdown of synthetic insecticides. In Drosophila melanogaster (Fruit fly), this protein is Cytochrome P450 4e2 (Cyp4e2).